A 437-amino-acid polypeptide reads, in one-letter code: Cytochrome b (437 aa).

A helical transmembrane segment spans residues 45 to 65; sequence WIWGIVLAFTLVLQIVTGIVL. The heme b site is built by histidine 97 and histidine 111. 9 helical membrane passes run 100–120, 129–149, 156–176, 194–214, 248–268, 298–318, 330–350, 365–385, and 391–411; these read GASL…YYGS, WIVG…GYVL, FWGA…GPSI, FFSL…IHIW, FVIK…AVVA, FLPF…VILV, FFGV…PWLD, MWFW…AMPT, and WISL…LPLL. Heme b-binding residues include histidine 198 and histidine 212.

Belongs to the cytochrome b family. The main subunits of complex b-c1 are: cytochrome b, cytochrome c1 and the Rieske protein. Heme b serves as cofactor.

The protein resides in the cell membrane. Functionally, component of the ubiquinol-cytochrome c reductase complex (complex III or cytochrome b-c1 complex), which is a respiratory chain that generates an electrochemical potential coupled to ATP synthesis. In Rhodobacter capsulatus (Rhodopseudomonas capsulata), this protein is Cytochrome b (petB).